The primary structure comprises 527 residues: Low-affinity Na(+)/H(+) antiporter NhaS1 (527 aa).

A run of 11 helical transmembrane segments spans residues 18–38 (FLIV…VPIL), 41–61 (IPYT…DVKL), 94–114 (WFPI…GIAF), 126–146 (IAFL…IALF), 169–189 (VAVV…TFDL), 196–216 (FVTV…SLSL), 240–260 (ILAE…GMVL), 276–296 (IVSI…FLLI), 311–331 (LILI…FGLS), 352–372 (TVLW…LSVP), and 380–400 (AIID…GLTT).

This sequence belongs to the monovalent cation:proton antiporter 1 (CPA1) transporter (TC 2.A.36) family.

It localises to the cell membrane. Its function is as follows. Na(+)/H(+) antiporter that extrudes sodium in exchange for external protons. Might be able to function at relatively high concentrations of Na(+) ions. Also has Li(+)/H(+) antiport activity under K(+)-rich conditions, but it might not have any physiological relevance. This Synechocystis sp. (strain ATCC 27184 / PCC 6803 / Kazusa) protein is Low-affinity Na(+)/H(+) antiporter NhaS1 (nhaS1).